The chain runs to 233 residues: Gamma-glutamyl-hercynylcysteine sulfoxide hydrolase (233 aa).

The active-site Nucleophile is the Cys-2. In terms of domain architecture, Glutamine amidotransferase type-2 spans 2–233 (CRHLGWLGAQ…TALDRAKGPR (232 aa)).

It carries out the reaction gamma-L-glutamyl-hercynylcysteine S-oxide + H2O = S-(hercyn-2-yl)-L-cysteine S-oxide + L-glutamate. It functions in the pathway amino-acid biosynthesis; ergothioneine biosynthesis. Functionally, catalyzes the hydrolysis of the gamma-glutamyl amide bond of hercynyl-gamma-L-glutamyl-L-cysteine sulfoxide to produce hercynylcysteine sulfoxide, a step in the biosynthesis pathway of ergothioneine. ERG is one of the major redox buffers which protects bacteria against redox stressors and antibiotics; loss of ERG or mycothiol (MSH, the other major redox buffer in this bacteria) leads to respiratory alterations and bioenergetic deficiencies that negatively impact virulence. The sequence is that of Gamma-glutamyl-hercynylcysteine sulfoxide hydrolase from Mycobacterium tuberculosis (strain CDC 1551 / Oshkosh).